A 1022-amino-acid chain; its full sequence is MNGEWKSALRLQIEALAKRNELHRKSSVDEIKKRTVDMDKRIVKLRELVGSSANDAALFYLECVCHADETERLLNRGSSVGKEKKWKKVKRKTSSSVAPPLSRTISSLPGVSSPDVIQTIDVSALEDQTPQRPHWWDQFQLYRRTDLLRFSKQNDRRELWRTQKDFFLSCLGFMVGVGHTMRFPAKVYQHGGGVFFIPYLFSLIFFGLPLVFLHLSLGQYTGQAANTAFQRLMPIGSGVGWALVVIAIPVAVYYNIIVAWAIHYFFQSAKGLLLGDELPWETCRDEWQLDNRCCNLHNLHSCFNSTNSITAPEAFFHSEVLSLSTFGDFALGPLQSHLVLSLAAAWLLVFFGVFKGLGSIAQTMNVTATVPYLLLSILLLRGISLPGANKGLTFLFTVDSTKLWKWQIWKSAAEQVFYELGIDAGPLISMAAFSRYRNNIYRDSVLLVIMDALTSCLSGMVIFSFVGFIASESNSNVNDVLKHDPLYLSFTVYPGVTSFMYWGGLWATLFFGMLVLAAIDAEFAWLEMIASAFMNHFSMKNKAVENRLLAFLCLAGFFLGLPLCAQGGIFVFHAIENLNANWNSFSLALLSVAIVCYVYGIDNYLTDISAMLRVPRIQISKATRLKEKLIYFFGPGGIYIKFSLCFICPVILTVLLVASVLGYQRISFAGRPIPIDYEIVAWIVMIGPLLVVPLVAFMQIRQIRNEGKLLKSLFDTSEWRESQDDSLEPKDLYMRQSGKFESPPNRRRTPTIFTHRENTYMYIDSRGPTVRSRVFPLGASLDPYGWKAGRLRDRQQQIEETASNYSEEDSATTNSFMASTVKHNDDMELTLFGSPPAILGDDEKIMTTRFSESMPVNYKCRNVEVPRIPNKLPQNMERMARKTRKKRSSPSASDPPVPTSPLPPPPKLQHCRSEPPMMNSKESHSPEIITPGDDSPSISNSSDDSSDDCFRRATVIRRKTSDDDAFTHFSTATAESISITPLDFPRQRSLSSVAIYDQEQKNGRSKVLSQLKRPKPIDMPPK.

Over 1 to 165 (MNGEWKSALR…RRELWRTQKD (165 aa)) the chain is Cytoplasmic. Residues 166-185 (FFLSCLGFMVGVGHTMRFPA) form a helical membrane-spanning segment. The Extracellular portion of the chain corresponds to 186–192 (KVYQHGG). The chain crosses the membrane as a helical span at residues 193–213 (GVFFIPYLFSLIFFGLPLVFL). The Cytoplasmic segment spans residues 214–241 (HLSLGQYTGQAANTAFQRLMPIGSGVGW). Residues 242–262 (ALVVIAIPVAVYYNIIVAWAI) traverse the membrane as a helical segment. The Extracellular portion of the chain corresponds to 263-337 (HYFFQSAKGL…DFALGPLQSH (75 aa)). The chain crosses the membrane as a helical span at residues 338–358 (LVLSLAAAWLLVFFGVFKGLG). Position 359 (Ser359) is a topological domain, cytoplasmic. Residues 360–380 (IAQTMNVTATVPYLLLSILLL) traverse the membrane as a helical segment. Topologically, residues 381-412 (RGISLPGANKGLTFLFTVDSTKLWKWQIWKSA) are extracellular. Residues 413–433 (AEQVFYELGIDAGPLISMAAF) form a helical membrane-spanning segment. The Cytoplasmic portion of the chain corresponds to 434–444 (SRYRNNIYRDS). Residues 445 to 465 (VLLVIMDALTSCLSGMVIFSF) traverse the membrane as a helical segment. The Extracellular segment spans residues 466-498 (VGFIASESNSNVNDVLKHDPLYLSFTVYPGVTS). The helical transmembrane segment at 499-519 (FMYWGGLWATLFFGMLVLAAI) threads the bilayer. The Cytoplasmic portion of the chain corresponds to 520 to 550 (DAEFAWLEMIASAFMNHFSMKNKAVENRLLA). The helical transmembrane segment at 551–571 (FLCLAGFFLGLPLCAQGGIFV) threads the bilayer. The Extracellular segment spans residues 572–584 (FHAIENLNANWNS). The chain crosses the membrane as a helical span at residues 585-605 (FSLALLSVAIVCYVYGIDNYL). The Cytoplasmic segment spans residues 606-641 (TDISAMLRVPRIQISKATRLKEKLIYFFGPGGIYIK). A helical membrane pass occupies residues 642–662 (FSLCFICPVILTVLLVASVLG). The Extracellular portion of the chain corresponds to 663–677 (YQRISFAGRPIPIDY). Residues 678–698 (EIVAWIVMIGPLLVVPLVAFM) form a helical membrane-spanning segment. Residues 699–1022 (QIRQIRNEGK…RPKPIDMPPK (324 aa)) lie on the Cytoplasmic side of the membrane. Disordered regions lie at residues 867–948 (RIPN…SSDD) and 995–1022 (IYDQEQKNGRSKVLSQLKRPKPIDMPPK). The span at 893 to 907 (SDPPVPTSPLPPPPK) shows a compositional bias: pro residues. Residues 933–943 (DDSPSISNSSD) are compositionally biased toward low complexity.

Belongs to the sodium:neurotransmitter symporter (SNF) (TC 2.A.22) family. As to quaternary structure, may interact with STAT family transcription factor sta-2; the interaction is probably direct.

It localises to the membrane. The protein resides in the cytoplasm. It is found in the vesicle. Functionally, probably mediates sodium-dependent uptake of unknown small molecule(s). By positively modulating expression, in the epidermis, of antimicrobial peptides such as nlp-29, plays a role in resistance to fungal infection and in the response to physical wounding and phorbol ester PMA treatment. Role in response to wounding of the epidermis may be facilitated by recruitment of snf-12 to the wound site by microtubule-dependent vesicle trafficking. Functions cell autonomously in the epidermis, in concert with STAT transcription factor sta-2, probably acting at vesicular membranes, downstream of a p38 MAPK/pmk-1 pathway. The sequence is that of Sodium-dependent transporter snf-12 from Caenorhabditis elegans.